The following is a 273-amino-acid chain: Putative peptidyl-prolyl cis-trans isomerase Cbf2 (273 aa).

An N-terminal signal peptide occupies residues 1-21 (MKKFSLVAATLIAGVVLNVNA). In terms of domain architecture, PpiC spans 131-228 (PARVQAKHIL…FGYHVILKEN (98 aa)).

The enzyme catalyses [protein]-peptidylproline (omega=180) = [protein]-peptidylproline (omega=0). This Campylobacter jejuni subsp. jejuni serotype O:2 (strain ATCC 700819 / NCTC 11168) protein is Putative peptidyl-prolyl cis-trans isomerase Cbf2 (cbf2).